A 349-amino-acid polypeptide reads, in one-letter code: L-lactate dehydrogenase (349 aa).

Residues 199-219 form a disordered region; it reads APEGSIIGADGNPTTDASTMF.

Belongs to the LDH2/MDH2 oxidoreductase family.

It is found in the cytoplasm. It catalyses the reaction (S)-lactate + NAD(+) = pyruvate + NADH + H(+). The protein operates within fermentation; pyruvate fermentation to lactate; (S)-lactate from pyruvate: step 1/1. In Cupriavidus necator (strain ATCC 17699 / DSM 428 / KCTC 22496 / NCIMB 10442 / H16 / Stanier 337) (Ralstonia eutropha), this protein is L-lactate dehydrogenase (ldh).